A 151-amino-acid polypeptide reads, in one-letter code: 3-dehydroquinate dehydratase (151 aa).

Y26 acts as the Proton acceptor in catalysis. The substrate site is built by N77, H83, and D90. H103 (proton donor) is an active-site residue. Substrate is bound by residues L104–S105 and R114.

The protein belongs to the type-II 3-dehydroquinase family. As to quaternary structure, homododecamer.

The enzyme catalyses 3-dehydroquinate = 3-dehydroshikimate + H2O. It functions in the pathway metabolic intermediate biosynthesis; chorismate biosynthesis; chorismate from D-erythrose 4-phosphate and phosphoenolpyruvate: step 3/7. In terms of biological role, catalyzes a trans-dehydration via an enolate intermediate. This chain is 3-dehydroquinate dehydratase, found in Pelodictyon phaeoclathratiforme (strain DSM 5477 / BU-1).